Reading from the N-terminus, the 91-residue chain is Large ribosomal subunit protein bL27 (91 aa).

The interval 1–22 (MAHKKGQGSSRNGRDSNPQYRG) is disordered. The span at 7–19 (QGSSRNGRDSNPQ) shows a compositional bias: polar residues.

This sequence belongs to the bacterial ribosomal protein bL27 family.

The polypeptide is Large ribosomal subunit protein bL27 (Myxococcus xanthus (strain DK1622)).